The primary structure comprises 154 residues: Deoxyuridine 5'-triphosphate nucleotidohydrolase (154 aa).

Substrate is bound by residues 64–66, asparagine 77, 81–83, and lysine 91; these read RSG and TVD.

This sequence belongs to the dUTPase family. Homotrimer. Mg(2+) is required as a cofactor.

It carries out the reaction dUTP + H2O = dUMP + diphosphate + H(+). The protein operates within pyrimidine metabolism; dUMP biosynthesis; dUMP from dCTP (dUTP route): step 2/2. This enzyme is involved in nucleotide metabolism: it produces dUMP, the immediate precursor of thymidine nucleotides and it decreases the intracellular concentration of dUTP so that uracil cannot be incorporated into DNA. This is Deoxyuridine 5'-triphosphate nucleotidohydrolase from Mycolicibacterium gilvum (strain PYR-GCK) (Mycobacterium gilvum (strain PYR-GCK)).